The sequence spans 563 residues: Arginine--tRNA ligase (563 aa).

The short motif at 108–118 (PNVAKEMHVGH) is the 'HIGH' region element.

The protein belongs to the class-I aminoacyl-tRNA synthetase family. Monomer.

It localises to the cytoplasm. The enzyme catalyses tRNA(Arg) + L-arginine + ATP = L-arginyl-tRNA(Arg) + AMP + diphosphate. The sequence is that of Arginine--tRNA ligase (argS) from Pasteurella multocida (strain Pm70).